The primary structure comprises 398 residues: Stearoyl-[acyl-carrier-protein] 9-desaturase, chloroplastic (398 aa).

The N-terminal 34 residues, 1–34 (MALKLHHTAFNPSMAVTSSGLPRSYHLRSHRVFM), are a transit peptide targeting the chloroplast. The tract at residues 46 to 66 (IPNAKKPHMPPREAHVQKTHS) is disordered. Fe cation-binding residues include glutamate 140, glutamate 178, histidine 181, glutamate 231, glutamate 264, and histidine 267.

The protein belongs to the fatty acid desaturase type 2 family. In terms of assembly, homodimer. The cofactor is Fe(2+).

It localises to the plastid. The protein localises to the chloroplast. It carries out the reaction octadecanoyl-[ACP] + 2 reduced [2Fe-2S]-[ferredoxin] + O2 + 2 H(+) = (9Z)-octadecenoyl-[ACP] + 2 oxidized [2Fe-2S]-[ferredoxin] + 2 H2O. It functions in the pathway lipid metabolism; fatty acid metabolism. Functionally, converts stearoyl-ACP to oleoyl-ACP by introduction of a cis double bond between carbons 9 and 10 of the acyl chain. The protein is Stearoyl-[acyl-carrier-protein] 9-desaturase, chloroplastic of Simmondsia chinensis (Jojoba).